The chain runs to 48 residues: MDRISAQKDIFKKVVNKENSSIFVSLGVFAVSVAILKSRLGNFLVPQL.

Residues 21–43 (SIFVSLGVFAVSVAILKSRLGNF) form a helical membrane-spanning segment.

Its subcellular location is the membrane. This is an uncharacterized protein from Schizosaccharomyces pombe (strain 972 / ATCC 24843) (Fission yeast).